The sequence spans 640 residues: Ribonuclease J (640 aa).

Zn(2+) is bound by residues H75, H77, D79, H80, H145, and D167. Substrate is bound at residue 368 to 372; that stretch reads HVSGH. H394 lines the Zn(2+) pocket. Positions 578–640 are disordered; it reads TVSATSATPA…RKRSTTSVSS (63 aa). The segment covering 598 to 610 has biased composition (basic and acidic residues); sequence PEPKVKAKPEKKV.

The protein belongs to the metallo-beta-lactamase superfamily. RNA-metabolizing metallo-beta-lactamase-like family. Bacterial RNase J subfamily. In terms of assembly, homodimer, may be a subunit of the RNA degradosome. Zn(2+) is required as a cofactor.

It is found in the cytoplasm. In terms of biological role, an RNase that has 5'-3' exonuclease and possibly endoonuclease activity. Involved in maturation of rRNA and in some organisms also mRNA maturation and/or decay. The polypeptide is Ribonuclease J (Synechocystis sp. (strain ATCC 27184 / PCC 6803 / Kazusa)).